We begin with the raw amino-acid sequence, 91 residues long: Putative transmembrane protein ORF91a (91 aa).

The next 3 helical transmembrane spans lie at 17–37, 40–60, and 69–89; these read TGISFDSITGAIIAGVVVGLA, AFLGKFPDYVEVLIGVGLLFM, and GIGFVLTADGIYGLIKNYIST.

The protein localises to the host membrane. The chain is Putative transmembrane protein ORF91a from Acidianus convivator (ABV).